A 478-amino-acid polypeptide reads, in one-letter code: UDP-glycosyltransferase 71B5 (478 aa).

Residues serine 280, 347–349 (APQ), 364–372 (HCGWNSILE), and 386–389 (YAEQ) contribute to the UDP-alpha-D-glucose site.

This sequence belongs to the UDP-glycosyltransferase family.

Functionally, possesses low quercetin 3-O-glucosyltransferase activity in vitro. This chain is UDP-glycosyltransferase 71B5 (UGT71B5), found in Arabidopsis thaliana (Mouse-ear cress).